A 181-amino-acid polypeptide reads, in one-letter code: Extracellular superoxide dismutase [Cu-Zn] (181 aa).

Positions 1-18 (MMQYLVVSLALCATICSA) are cleaved as a signal peptide. Asn46 carries an N-linked (GlcNAc...) asparagine glycan. Residues His75, His77, and His92 each contribute to the Cu cation site. Residues Cys86 and Cys175 are joined by a disulfide bond. Zn(2+) is bound by residues His92, His100, His109, and Asp112. An N-linked (GlcNAc...) asparagine glycan is attached at Asn119. His149 lines the Cu cation pocket. A glycan (N-linked (GlcNAc...) asparagine) is linked at Asn159.

This sequence belongs to the Cu-Zn superoxide dismutase family. It depends on Cu cation as a cofactor. Zn(2+) is required as a cofactor. In terms of tissue distribution, expressed at higher levels in females compared to males.

The protein localises to the secreted. It carries out the reaction 2 superoxide + 2 H(+) = H2O2 + O2. Functionally, protects the extracellular space from the toxic effects of reactive oxygen intermediates by converting superoxide radicals into hydrogen peroxide and oxygen. The sequence is that of Extracellular superoxide dismutase [Cu-Zn] from Drosophila melanogaster (Fruit fly).